The chain runs to 139 residues: NADH-quinone oxidoreductase subunit A (139 aa).

The next 3 helical transmembrane spans lie at 16 to 36, 69 to 89, and 94 to 114; these read GLFI…ASLL, LVAM…AWAV, and VGWE…AGLV.

It belongs to the complex I subunit 3 family. As to quaternary structure, NDH-1 is composed of 14 different subunits. Subunits NuoA, H, J, K, L, M, N constitute the membrane sector of the complex.

The protein localises to the cell inner membrane. It catalyses the reaction a quinone + NADH + 5 H(+)(in) = a quinol + NAD(+) + 4 H(+)(out). NDH-1 shuttles electrons from NADH, via FMN and iron-sulfur (Fe-S) centers, to quinones in the respiratory chain. The immediate electron acceptor for the enzyme in this species is believed to be ubiquinone. Couples the redox reaction to proton translocation (for every two electrons transferred, four hydrogen ions are translocated across the cytoplasmic membrane), and thus conserves the redox energy in a proton gradient. This chain is NADH-quinone oxidoreductase subunit A, found in Chromohalobacter salexigens (strain ATCC BAA-138 / DSM 3043 / CIP 106854 / NCIMB 13768 / 1H11).